Consider the following 291-residue polypeptide: Pantothenate synthetase (291 aa).

30 to 37 is a binding site for ATP; the sequence is MGNLHEGH. His-37 acts as the Proton donor in catalysis. Gln-61 is a (R)-pantoate binding site. Gln-61 is a binding site for beta-alanine. Residue 149–152 participates in ATP binding; sequence GEKD. Residue Gln-155 participates in (R)-pantoate binding. ATP is bound by residues Val-178 and 186–189; that span reads MSSR.

It belongs to the pantothenate synthetase family. In terms of assembly, homodimer.

Its subcellular location is the cytoplasm. The enzyme catalyses (R)-pantoate + beta-alanine + ATP = (R)-pantothenate + AMP + diphosphate + H(+). The protein operates within cofactor biosynthesis; (R)-pantothenate biosynthesis; (R)-pantothenate from (R)-pantoate and beta-alanine: step 1/1. Its function is as follows. Catalyzes the condensation of pantoate with beta-alanine in an ATP-dependent reaction via a pantoyl-adenylate intermediate. The chain is Pantothenate synthetase from Aliivibrio fischeri (strain ATCC 700601 / ES114) (Vibrio fischeri).